A 48-amino-acid polypeptide reads, in one-letter code: Delta-stichotoxin-Hmg4b (48 aa).

Cystine bridges form between C3-C43, C5-C33, and C26-C44.

This sequence belongs to the sea anemone sodium channel inhibitory toxin family. Type II subfamily.

It localises to the secreted. Its subcellular location is the nematocyst. In terms of biological role, binds specifically to voltage-gated sodium channels (Nav), thereby delaying their inactivation during signal transduction. Its toxicity is greater than that of RpII (AC P01534). This Heteractis magnifica (Magnificent sea anemone) protein is Delta-stichotoxin-Hmg4b.